A 267-amino-acid polypeptide reads, in one-letter code: uncharacterized protein (267 aa).

An ABC transporter domain is found at 17-248 (LKVENLTKIF…PRDRTSIEFL (232 aa)). 53–60 (GPSGCGKT) contacts ATP.

Belongs to the ABC transporter superfamily.

This is an uncharacterized protein from Methanocaldococcus jannaschii (strain ATCC 43067 / DSM 2661 / JAL-1 / JCM 10045 / NBRC 100440) (Methanococcus jannaschii).